We begin with the raw amino-acid sequence, 1179 residues long: Calcium-activated potassium channel subunit alpha-1 (1179 aa).

A compositionally biased stretch (gly residues) spans 1–24 (MANGGGGGGGSSGGGGGGGGGGSG). Residues 1 to 62 (MANGGGGGGG…SSSSSSSSSV (62 aa)) are disordered. The Extracellular portion of the chain corresponds to 1 to 87 (MANGGGGGGG…VPCDSRGQRM (87 aa)). Low complexity predominate over residues 41–61 (SSSSSSSSSSSSSSSSSSSSS). The helical transmembrane segment at 88–108 (WWAFLASSMVTFFGGLFIILL) threads the bilayer. The Cytoplasmic portion of the chain corresponds to 109–179 (WRTLKYLWTV…MISAQTLTGR (71 aa)). S-palmitoyl cysteine attachment occurs at residues Cys-119, Cys-120, and Cys-122. A helical transmembrane segment spans residues 180–200 (VLVVLVFALSIGALVIYFIDS). Residues 201–215 (SNPIESCQNFYKDFT) are Extracellular-facing. The chain crosses the membrane as a helical span at residues 216–236 (LQIDMAFNVFFLLYFGLRFIA). Topologically, residues 237-240 (ANDK) are cytoplasmic. Residues 241–261 (LWFWLEVNSVVDFFTVPPVFV) traverse the membrane as a helical segment. Residues 262–265 (SVYL) are Extracellular-facing. Residues 266-286 (NRSWLGLRFLRALRLIQFSEI) form a helical; Voltage-sensor membrane-spanning segment. Residues 287 to 301 (LQFLNILKTSNSIKL) lie on the Cytoplasmic side of the membrane. Residues 302-322 (VNLLSIFISTWLTAAGFIHLV) traverse the membrane as a helical segment. Residues 323-336 (ENSGDPWENFQNNQ) are Extracellular-facing. Positions 337-359 (ALTYWECVYLLMVTMSTVGYGDV) form an intramembrane region, pore-forming. The short motif at 353-356 (TVGY) is the Selectivity for potassium element. Residues 360–368 (YAKTTLGRL) lie on the Extracellular side of the membrane. A helical transmembrane segment spans residues 369 to 389 (FMVFFILGGLAMFASYVPEII). Topologically, residues 390 to 1179 (ELIGNRKKYG…KQKYVQEERL (790 aa)) are cytoplasmic. The RCK N-terminal 1 domain occupies 408 to 550 (RKHIVVCGHI…WNWKEGDDAI (143 aa)). Residues Glu-440, Gln-463, and Glu-465 each contribute to the Mg(2+) site. A segment S7 region spans residues 557-577 (LGFIAQSCLAQGLSTMLANLF). The tract at residues 614–634 (LSFPTVCELCFVKLKLLMIAI) is segment S8. Residues 678–682 (CKACH) form a heme-binding motif region. Positions 702–730 (EQPSTLSPKKKQRNGGMRNSPNSSPKLMR) are disordered. Residue Thr-706 is modified to Phosphothreonine. Phosphoserine is present on residues Ser-708, Ser-721, and Ser-725. The interval 780 to 800 (VLSGHVVVCIFGDVSSALIGL) is segment S9. The region spanning 782-926 (SGHVVVCIFG…MDRSSPDNSP (145 aa)) is the RCK N-terminal 2 domain. A Phosphothreonine modification is found at Thr-913. Residues Ser-921 and Ser-925 each carry the phosphoserine modification. The Calcium bowl signature appears at 946–968 (TELVNDTNVQFLDQDDDDDPDTE). 4 residues coordinate Ca(2+): Gln-955, Asp-958, Asp-961, and Asp-963. The tract at residues 975-995 (FACGTAFAVSVLDSLMSATYF) is segment S10. Residues 1129 to 1154 (RASLSHSSHSSQSSSKKSSSVHSIPS) are compositionally biased toward low complexity. Residues 1129–1179 (RASLSHSSHSSQSSSKKSSSVHSIPSTANRQNRPKSRESRDKQKYVQEERL) are disordered. A compositionally biased stretch (basic and acidic residues) spans 1163–1179 (KSRESRDKQKYVQEERL). A phosphoserine mark is found at Ser-1164 and Ser-1167.

This sequence belongs to the potassium channel family. Calcium-activated (TC 1.A.1.3) subfamily. KCa1.1/KCNMA1 sub-subfamily. Homotetramer; which constitutes the calcium-activated potassium channel. Interacts with beta subunits KCNMB1, KCNMB2, KCNMB3 and KCNMB4. Interacts with gamma subunits LRRC26, LRRC38, LRRC52 and LRRC55. Beta and gamma subunits are accessory, and modulate its activity. Interacts with RAB11B. Post-translationally, phosphorylated. Phosphorylation by kinases such as PKA and/or PKG. In smooth muscles, phosphorylation affects its activity. In terms of processing, palmitoylation by ZDHHC22 and ZDHHC23 within the intracellular linker between the S0 and S1 transmembrane domains regulates localization to the plasma membrane. Depalmitoylated by LYPLA1 and LYPLAL1, leading to retard exit from the trans-Golgi network.

It is found in the cell membrane. The protein resides in the endoplasmic reticulum membrane. The enzyme catalyses K(+)(in) = K(+)(out). Its activity is regulated as follows. Ethanol and carbon monoxide-bound heme increase channel activation. Heme inhibits channel activation. Potassium channel activated by both membrane depolarization or increase in cytosolic Ca(2+) that mediates export of K(+). It is also activated by the concentration of cytosolic Mg(2+). Its activation dampens the excitatory events that elevate the cytosolic Ca(2+) concentration and/or depolarize the cell membrane. It therefore contributes to repolarization of the membrane potential. Plays a key role in controlling excitability in a number of systems, such as regulation of the contraction of smooth muscle, the tuning of hair cells in the cochlea, regulation of transmitter release, and innate immunity. In smooth muscles, its activation by high level of Ca(2+), caused by ryanodine receptors in the sarcoplasmic reticulum, regulates the membrane potential. In cochlea cells, its number and kinetic properties partly determine the characteristic frequency of each hair cell and thereby helps to establish a tonotopic map. Kinetics of KCNMA1 channels are determined by alternative splicing, phosphorylation status and its combination with modulating beta subunits. Highly sensitive to both iberiotoxin (IbTx) and charybdotoxin (CTX). In terms of biological role, potassium channel activated by both membrane depolarization or increase in cytosolic Ca(2+) that mediates export of K(+). In Oryctolagus cuniculus (Rabbit), this protein is Calcium-activated potassium channel subunit alpha-1 (KCNMA1).